The chain runs to 336 residues: Alpha-glucoside transport system permease protein AglF (336 aa).

Transmembrane regions (helical) follow at residues 4–24, 55–75, 113–133, 146–166, 176–196, 202–222, 258–278, and 304–324; these read LIAAILTMVAGVLVCAAYFWS, PWLFLAPALLALTLYLVYPVV, FLWLLVVPALSTFFGLIIAAL, LIFMPMAISFVGAAVIWKFIY, IGLLNAIVVALGGEPQAWITL, FFLMVILIWIQTGFAMVILSA, IAVVWTTITILVLKVFDIVLA, and FGRGAAIAVVIMILVVPIMIW. One can recognise an ABC transmembrane type-1 domain in the interval 109–325; that stretch reads IFNNFLWLLV…ILVVPIMIWN (217 aa).

The protein belongs to the binding-protein-dependent transport system permease family. MalFG subfamily.

It is found in the cell inner membrane. Functionally, part of the binding-protein-dependent transport system for alpha-glucosides such as sucrose, maltose and trehalose. Probably responsible for the translocation of the substrate across the membrane. The chain is Alpha-glucoside transport system permease protein AglF (aglF) from Rhizobium meliloti (strain 1021) (Ensifer meliloti).